A 339-amino-acid polypeptide reads, in one-letter code: DNA-directed RNA polymerase subunit alpha (339 aa).

Residues 1–233 (MVREEVAGST…DLFLPFLHAE (233 aa)) form an alpha N-terminal domain (alpha-NTD) region. The alpha C-terminal domain (alpha-CTD) stretch occupies residues 266-339 (GIPLNCIFID…IDLLKNKLSF (74 aa)).

It belongs to the RNA polymerase alpha chain family. As to quaternary structure, in plastids the minimal PEP RNA polymerase catalytic core is composed of four subunits: alpha, beta, beta', and beta''. When a (nuclear-encoded) sigma factor is associated with the core the holoenzyme is formed, which can initiate transcription.

The protein localises to the plastid. The protein resides in the chloroplast. It catalyses the reaction RNA(n) + a ribonucleoside 5'-triphosphate = RNA(n+1) + diphosphate. DNA-dependent RNA polymerase catalyzes the transcription of DNA into RNA using the four ribonucleoside triphosphates as substrates. This is DNA-directed RNA polymerase subunit alpha from Psathyrostachys juncea (Russian wildrye).